The following is a 469-amino-acid chain: 6-phospho-beta-galactosidase (469 aa).

Positions 19, 116, 159, 160, and 297 each coordinate D-galactose 6-phosphate. Glu160 (proton donor) is an active-site residue. Glu375 serves as the catalytic Nucleophile. 4 residues coordinate D-galactose 6-phosphate: Ser428, Trp429, Lys435, and Tyr437.

The protein belongs to the glycosyl hydrolase 1 family.

The enzyme catalyses a 6-phospho-beta-D-galactoside + H2O = D-galactose 6-phosphate + an alcohol. The protein operates within carbohydrate metabolism; lactose degradation; D-galactose 6-phosphate and beta-D-glucose from lactose 6-phosphate: step 1/1. This is 6-phospho-beta-galactosidase from Streptococcus equi subsp. zooepidemicus (strain MGCS10565).